The following is a 173-amino-acid chain: Co-chaperone protein HscB (173 aa).

One can recognise a J domain in the interval 2–74 (DYFTLFGLPA…LKRAEYMLSL (73 aa)).

The protein belongs to the HscB family. As to quaternary structure, interacts with HscA and stimulates its ATPase activity. Interacts with IscU.

Its function is as follows. Co-chaperone involved in the maturation of iron-sulfur cluster-containing proteins. Seems to help targeting proteins to be folded toward HscA. This Photorhabdus laumondii subsp. laumondii (strain DSM 15139 / CIP 105565 / TT01) (Photorhabdus luminescens subsp. laumondii) protein is Co-chaperone protein HscB.